The following is a 239-amino-acid chain: mRNA turnover protein 4 homolog (239 aa).

Residues 216–239 (QQMGDDLPESAPESEGESEEEDDS) are disordered. A compositionally biased stretch (acidic residues) spans 221 to 239 (DLPESAPESEGESEEEDDS). Residues Ser-225, Ser-229, and Ser-233 each carry the phosphoserine modification.

Belongs to the universal ribosomal protein uL10 family. In terms of assembly, associates with the pre-60S ribosomal particle. Interacts with MINAS-60 (product of an alternative open reading frame of RBM10).

It localises to the nucleus. The protein resides in the nucleolus. The protein localises to the cytoplasm. Component of the ribosome assembly machinery. Nuclear paralog of the ribosomal protein P0, it binds pre-60S subunits at an early stage of assembly in the nucleolus, and is replaced by P0 in cytoplasmic pre-60S subunits and mature 80S ribosomes. The protein is mRNA turnover protein 4 homolog (MRTO4) of Bos taurus (Bovine).